Here is a 435-residue protein sequence, read N- to C-terminus: Serine--tRNA ligase (435 aa).

234-236 lines the L-serine pocket; that stretch reads TAE. Position 265–267 (265–267) interacts with ATP; it reads RRE. E288 contacts L-serine. 352–355 is a binding site for ATP; it reads EISS. Residue S388 coordinates L-serine.

The protein belongs to the class-II aminoacyl-tRNA synthetase family. Type-1 seryl-tRNA synthetase subfamily. As to quaternary structure, homodimer. The tRNA molecule binds across the dimer.

The protein resides in the cytoplasm. It catalyses the reaction tRNA(Ser) + L-serine + ATP = L-seryl-tRNA(Ser) + AMP + diphosphate + H(+). It carries out the reaction tRNA(Sec) + L-serine + ATP = L-seryl-tRNA(Sec) + AMP + diphosphate + H(+). The protein operates within aminoacyl-tRNA biosynthesis; selenocysteinyl-tRNA(Sec) biosynthesis; L-seryl-tRNA(Sec) from L-serine and tRNA(Sec): step 1/1. In terms of biological role, catalyzes the attachment of serine to tRNA(Ser). Is also able to aminoacylate tRNA(Sec) with serine, to form the misacylated tRNA L-seryl-tRNA(Sec), which will be further converted into selenocysteinyl-tRNA(Sec). The protein is Serine--tRNA ligase of Synechococcus sp. (strain JA-3-3Ab) (Cyanobacteria bacterium Yellowstone A-Prime).